Here is a 178-residue protein sequence, read N- to C-terminus: MSTTPAVAEDLIVLGKIVSVHGVRGEVKVYSFTDPIDNVLDYRHWTLRRDGEVKKVELASGRLQGKVLVAKLKGLDDREIARTYAGFEICVPRSELPDLEEGEFYWYQLQGLKVIDQAGQLLGVVDHLFETGANDVMVVKACAGSLDDRERLLPYTDQCVLSIDLAAGEMRVDWDADF.

The PRC barrel domain maps to 101 to 178 (EGEFYWYQLQ…EMRVDWDADF (78 aa)).

It belongs to the RimM family. Binds ribosomal protein uS19.

The protein resides in the cytoplasm. In terms of biological role, an accessory protein needed during the final step in the assembly of 30S ribosomal subunit, possibly for assembly of the head region. Essential for efficient processing of 16S rRNA. May be needed both before and after RbfA during the maturation of 16S rRNA. It has affinity for free ribosomal 30S subunits but not for 70S ribosomes. The chain is Ribosome maturation factor RimM from Ectopseudomonas mendocina (strain ymp) (Pseudomonas mendocina).